Here is a 357-residue protein sequence, read N- to C-terminus: Holliday junction branch migration complex subunit RuvB (357 aa).

Low complexity predominate over residues Met-1 to Pro-15. The tract at residues Met-1–Ile-30 is disordered. The large ATPase domain (RuvB-L) stretch occupies residues Asp-13–Tyr-195. Residues Leu-34, Arg-35, Gly-76, Lys-79, Thr-80, Thr-81, Glu-142–Phe-144, Arg-185, Tyr-195, and Arg-232 contribute to the ATP site. Residue Thr-80 coordinates Mg(2+). The tract at residues Asn-196–Asp-266 is small ATPAse domain (RuvB-S). Residues Pro-269–Lys-357 are head domain (RuvB-H). Residues Arg-305, Arg-324, and Arg-329 each coordinate DNA.

This sequence belongs to the RuvB family. As to quaternary structure, homohexamer. Forms an RuvA(8)-RuvB(12)-Holliday junction (HJ) complex. HJ DNA is sandwiched between 2 RuvA tetramers; dsDNA enters through RuvA and exits via RuvB. An RuvB hexamer assembles on each DNA strand where it exits the tetramer. Each RuvB hexamer is contacted by two RuvA subunits (via domain III) on 2 adjacent RuvB subunits; this complex drives branch migration. In the full resolvosome a probable DNA-RuvA(4)-RuvB(12)-RuvC(2) complex forms which resolves the HJ.

It is found in the cytoplasm. It catalyses the reaction ATP + H2O = ADP + phosphate + H(+). Functionally, the RuvA-RuvB-RuvC complex processes Holliday junction (HJ) DNA during genetic recombination and DNA repair, while the RuvA-RuvB complex plays an important role in the rescue of blocked DNA replication forks via replication fork reversal (RFR). RuvA specifically binds to HJ cruciform DNA, conferring on it an open structure. The RuvB hexamer acts as an ATP-dependent pump, pulling dsDNA into and through the RuvAB complex. RuvB forms 2 homohexamers on either side of HJ DNA bound by 1 or 2 RuvA tetramers; 4 subunits per hexamer contact DNA at a time. Coordinated motions by a converter formed by DNA-disengaged RuvB subunits stimulates ATP hydrolysis and nucleotide exchange. Immobilization of the converter enables RuvB to convert the ATP-contained energy into a lever motion, pulling 2 nucleotides of DNA out of the RuvA tetramer per ATP hydrolyzed, thus driving DNA branch migration. The RuvB motors rotate together with the DNA substrate, which together with the progressing nucleotide cycle form the mechanistic basis for DNA recombination by continuous HJ branch migration. Branch migration allows RuvC to scan DNA until it finds its consensus sequence, where it cleaves and resolves cruciform DNA. In Bordetella parapertussis (strain 12822 / ATCC BAA-587 / NCTC 13253), this protein is Holliday junction branch migration complex subunit RuvB.